The sequence spans 301 residues: Mitochondrial substrate carrier family protein Z (301 aa).

At 1–19 (MTGKEENKQQQHVNFPWKR) the chain is on the mitochondrial intermembrane side. 3 Solcar repeats span residues 14–101 (NFPW…FTEQ), 116–200 (QQFG…ISDY), and 210–293 (LPVW…VMGI). Residues 20-37 (LVAGAVAGTADVWACHPL) traverse the membrane as a helical segment. The Mitochondrial matrix segment spans residues 38-65 (DRIKTQLQNNPGKSIVGTFGDIVSKGKG). The helical transmembrane segment at 66-86 (FTGGVNALYEGILPMTAEAIF) threads the bilayer. The Mitochondrial intermembrane portion of the chain corresponds to 87–117 (KVGIRYFAFSWFTEQYKTTVYKGETLNKKQQ). Residues 118–138 (FGANLLGGAFAGTIESFVVVI) form a helical membrane-spanning segment. Residues 139–174 (PCELLKVRHMTQEHNKSFGTVFRDVLREEGFQGLYK) lie on the Mitochondrial matrix side of the membrane. A helical transmembrane segment spans residues 175-191 (GGSATLLRQITNHMIRF). Residues 192–212 (PTFYAISDYLKGGDHSVHLPV) lie on the Mitochondrial intermembrane side of the membrane. Residues 213-229 (WQNLSAGAIAGTASTLF) form a helical membrane-spanning segment. At 230–275 (NNPLDTIKTRMQKQGQNQTTMQVVRGIYQETGVKGYWAGVIPRILR) the chain is on the mitochondrial matrix side. Residues 276 to 296 (VAPGQAITWAVVELVMGILEP) form a helical membrane-spanning segment. Residues 297–301 (SSKKH) lie on the Mitochondrial intermembrane side of the membrane.

The protein belongs to the mitochondrial carrier (TC 2.A.29) family.

The protein resides in the mitochondrion inner membrane. Its function is as follows. Mitochondrial solute carriers shuttle metabolites, nucleotides, and cofactors through the mitochondrial inner membrane. This is Mitochondrial substrate carrier family protein Z (mcfZ) from Dictyostelium discoideum (Social amoeba).